The chain runs to 289 residues: Ribosomal RNA small subunit methyltransferase A (289 aa).

The S-adenosyl-L-methionine site is built by Asn21, Leu23, Gly48, Glu69, Asp94, and Asn120.

This sequence belongs to the class I-like SAM-binding methyltransferase superfamily. rRNA adenine N(6)-methyltransferase family. RsmA subfamily.

The protein resides in the cytoplasm. It carries out the reaction adenosine(1518)/adenosine(1519) in 16S rRNA + 4 S-adenosyl-L-methionine = N(6)-dimethyladenosine(1518)/N(6)-dimethyladenosine(1519) in 16S rRNA + 4 S-adenosyl-L-homocysteine + 4 H(+). Specifically dimethylates two adjacent adenosines (A1518 and A1519) in the loop of a conserved hairpin near the 3'-end of 16S rRNA in the 30S particle. May play a critical role in biogenesis of 30S subunits. The sequence is that of Ribosomal RNA small subunit methyltransferase A from Actinobacillus pleuropneumoniae serotype 3 (strain JL03).